Here is a 234-residue protein sequence, read N- to C-terminus: LexA repressor (234 aa).

Residues 1–29 (MSDAANPEGHKRSLPGRPPGIRADSSGLT) are disordered. A DNA-binding region (H-T-H motif) is located at residues 52 to 72 (MREIGQAVGLSSTSSVAHQLM). The segment at 90–109 (YEVRGSDQAASVQPTDTAGK) is disordered. Active-site for autocatalytic cleavage activity residues include Ser-158 and Lys-195.

Belongs to the peptidase S24 family. Homodimer.

The catalysed reaction is Hydrolysis of Ala-|-Gly bond in repressor LexA.. Its function is as follows. Represses a number of genes involved in the response to DNA damage (SOS response), including recA and lexA. In the presence of single-stranded DNA, RecA interacts with LexA causing an autocatalytic cleavage which disrupts the DNA-binding part of LexA, leading to derepression of the SOS regulon and eventually DNA repair. The sequence is that of LexA repressor from Streptomyces coelicolor (strain ATCC BAA-471 / A3(2) / M145).